The following is a 189-amino-acid chain: Large ribosomal subunit protein uL5 (189 aa).

It belongs to the universal ribosomal protein uL5 family. In terms of assembly, part of the 50S ribosomal subunit; part of the 5S rRNA/L5/L18/L25 subcomplex. Contacts the 5S rRNA and the P site tRNA. Forms a bridge to the 30S subunit in the 70S ribosome.

This is one of the proteins that bind and probably mediate the attachment of the 5S RNA into the large ribosomal subunit, where it forms part of the central protuberance. In the 70S ribosome it contacts protein S13 of the 30S subunit (bridge B1b), connecting the 2 subunits; this bridge is implicated in subunit movement. Contacts the P site tRNA; the 5S rRNA and some of its associated proteins might help stabilize positioning of ribosome-bound tRNAs. The sequence is that of Large ribosomal subunit protein uL5 from Corynebacterium jeikeium (strain K411).